A 477-amino-acid chain; its full sequence is Bifunctional protein HldE (477 aa).

The segment at 1-318 (MKVNLPAFER…ENAVRGRADT (318 aa)) is ribokinase. 195 to 198 (NLSE) is an ATP binding site. Asp-264 is a catalytic residue. The interval 344 to 477 (MTNGVFDILH…IKKIQTESEK (134 aa)) is cytidylyltransferase.

The protein in the N-terminal section; belongs to the carbohydrate kinase PfkB family. In the C-terminal section; belongs to the cytidylyltransferase family. As to quaternary structure, homodimer.

It carries out the reaction D-glycero-beta-D-manno-heptose 7-phosphate + ATP = D-glycero-beta-D-manno-heptose 1,7-bisphosphate + ADP + H(+). The catalysed reaction is D-glycero-beta-D-manno-heptose 1-phosphate + ATP + H(+) = ADP-D-glycero-beta-D-manno-heptose + diphosphate. It participates in nucleotide-sugar biosynthesis; ADP-L-glycero-beta-D-manno-heptose biosynthesis; ADP-L-glycero-beta-D-manno-heptose from D-glycero-beta-D-manno-heptose 7-phosphate: step 1/4. It functions in the pathway nucleotide-sugar biosynthesis; ADP-L-glycero-beta-D-manno-heptose biosynthesis; ADP-L-glycero-beta-D-manno-heptose from D-glycero-beta-D-manno-heptose 7-phosphate: step 3/4. Catalyzes the phosphorylation of D-glycero-D-manno-heptose 7-phosphate at the C-1 position to selectively form D-glycero-beta-D-manno-heptose-1,7-bisphosphate. Functionally, catalyzes the ADP transfer from ATP to D-glycero-beta-D-manno-heptose 1-phosphate, yielding ADP-D-glycero-beta-D-manno-heptose. This is Bifunctional protein HldE from Salmonella enteritidis PT4 (strain P125109).